The primary structure comprises 247 residues: Carboxy-S-adenosyl-L-methionine synthase (247 aa).

S-adenosyl-L-methionine-binding positions include Tyr39, 64–66, 89–90, 117–118, Asn132, and Arg199; these read GCS, DN, and DI.

The protein belongs to the class I-like SAM-binding methyltransferase superfamily. Cx-SAM synthase family. In terms of assembly, homodimer.

It catalyses the reaction prephenate + S-adenosyl-L-methionine = carboxy-S-adenosyl-L-methionine + 3-phenylpyruvate + H2O. In terms of biological role, catalyzes the conversion of S-adenosyl-L-methionine (SAM) to carboxy-S-adenosyl-L-methionine (Cx-SAM). This chain is Carboxy-S-adenosyl-L-methionine synthase, found in Salmonella paratyphi B (strain ATCC BAA-1250 / SPB7).